The sequence spans 444 residues: IMP-specific 5'-nucleotidase 1 (444 aa).

ATP contacts are provided by lysine 132 and histidine 150. The active-site Nucleophile is the aspartate 170. Residues aspartate 170, aspartate 172, aspartate 178, threonine 204, serine 207, serine 308, aspartate 363, and lysine 371 each coordinate IMP. The Mg(2+) site is built by aspartate 170 and aspartate 172. Catalysis depends on aspartate 172, which acts as the Proton donor. Aspartate 394 serves as a coordination point for Mg(2+).

Belongs to the ISN1 family. In terms of assembly, homotetramer. It depends on Mg(2+) as a cofactor.

It is found in the cytoplasm. The enzyme catalyses IMP + H2O = inosine + phosphate. With respect to regulation, at physiological pH, allosterically activated by ATP. ATP binding is a prerequisite to magnesium and substrate binding. ATP binds to 2 of the subunits in the homotetramer inducing a closure of these 2 subunits and the release of the C-terminal loop, thereby activating the enzyme. In this conformation, the enzyme can bind IMP and magnesium which ultimately leads to the release of ATP. At pH 5, ATP does not have an allosteric role and is dispensable for magnesium and substrate binding. Inhibited by phosphocholine and D-myo-inositol-4-phosphate. In terms of biological role, specifically, catalyzes the dephosphorylation of inosine monophosphate (IMP) into inosine. By dephosphorylating IMP, plays a role in the purine salvage pathway. Does not have phosphotransferase activity with IMP as phosphate donor and adenosine as phosphate acceptor. This chain is IMP-specific 5'-nucleotidase 1, found in Plasmodium falciparum (isolate 3D7).